The chain runs to 118 residues: MANFISLKRNEDILNIIKKQQKIHSNHIVVYFCETNLKKVRLAISISKKKFKLATQRNRIRRLIKAWFIAANVLVESYDIVVLVKPSFIDGSFVLNCDNIKKILQTIISKHKQNKINK.

This sequence belongs to the RnpA family. As to quaternary structure, consists of a catalytic RNA component (M1 or rnpB) and a protein subunit.

The catalysed reaction is Endonucleolytic cleavage of RNA, removing 5'-extranucleotides from tRNA precursor.. In terms of biological role, RNaseP catalyzes the removal of the 5'-leader sequence from pre-tRNA to produce the mature 5'-terminus. It can also cleave other RNA substrates such as 4.5S RNA. The protein component plays an auxiliary but essential role in vivo by binding to the 5'-leader sequence and broadening the substrate specificity of the ribozyme. In Ureaplasma urealyticum serovar 10 (strain ATCC 33699 / Western), this protein is Ribonuclease P protein component.